The primary structure comprises 1872 residues: Fatty acid synthase beta subunit pkiC (1872 aa).

An acetyltransferase (AT) domain region spans residues 174 to 425 (VFGGQGECSR…DQSRIPFRDR (252 aa)). Residues 591-836 (NRVLGAPPIM…IIAATPGVSD (246 aa)) are enoyl reductase (ER) domain. The interval 1111 to 1132 (TTPASWSTLSLTERDTSEETSD) is disordered. The interval 1158–1597 (PSHPLWMRAL…MPLEKLVVEI (440 aa)) is dehydratase (DH) domain. Positions 1518-1617 (PPSNEPYAQL…CFSILAKRKE (100 aa)) constitute a MaoC-like domain.

This sequence belongs to the fungal fatty acid synthetase subunit beta family. [Alpha(6)beta(6)] hexamers of two multifunctional subunits (alpha and beta).

The enzyme catalyses acetyl-CoA + n malonyl-CoA + 2n NADPH + 4n H(+) = a long-chain-acyl-CoA + n CoA + n CO2 + 2n NADP(+).. It catalyses the reaction holo-[ACP] + acetyl-CoA = acetyl-[ACP] + CoA. It carries out the reaction holo-[ACP] + malonyl-CoA = malonyl-[ACP] + CoA. The catalysed reaction is a (3R)-hydroxyacyl-[ACP] = a (2E)-enoyl-[ACP] + H2O. The enzyme catalyses a 2,3-saturated acyl-[ACP] + NAD(+) = a (2E)-enoyl-[ACP] + NADH + H(+). It catalyses the reaction (9Z)-octadecenoyl-[ACP] + H2O = (9Z)-octadecenoate + holo-[ACP] + H(+). Its pathway is secondary metabolite biosynthesis. Fatty acid synthase beta subunit; part of the pki gene cluster that mediates the biosynthesis of 2,4-dihydroxy-3-methyl-6-(2-oxoundecyl)benzaldehyde. The first step in the pathway is the generation of the decanoyl starter unit by the FAS composed of subunits pkiB and pkiC, which is then transferred directly from the FAS to the SAT domain of the non-reducing polyketide synthase pkiA. PkiA condenses the decanoyyl starter unit with 4 malonyl-CoA units and performs one methylation step to yield 2,4-dihydroxy-3-methyl-6-(2-oxoundecyl)benzaldehyde. The sequence is that of Fatty acid synthase beta subunit pkiC from Emericella nidulans (strain FGSC A4 / ATCC 38163 / CBS 112.46 / NRRL 194 / M139) (Aspergillus nidulans).